Consider the following 212-residue polypeptide: ATP phosphoribosyltransferase (212 aa).

The protein belongs to the ATP phosphoribosyltransferase family. Short subfamily. Heteromultimer composed of HisG and HisZ subunits.

The protein localises to the cytoplasm. It catalyses the reaction 1-(5-phospho-beta-D-ribosyl)-ATP + diphosphate = 5-phospho-alpha-D-ribose 1-diphosphate + ATP. It participates in amino-acid biosynthesis; L-histidine biosynthesis; L-histidine from 5-phospho-alpha-D-ribose 1-diphosphate: step 1/9. Catalyzes the condensation of ATP and 5-phosphoribose 1-diphosphate to form N'-(5'-phosphoribosyl)-ATP (PR-ATP). Has a crucial role in the pathway because the rate of histidine biosynthesis seems to be controlled primarily by regulation of HisG enzymatic activity. This Prochlorococcus marinus (strain MIT 9515) protein is ATP phosphoribosyltransferase.